We begin with the raw amino-acid sequence, 601 residues long: N-acetyltransferase ESCO2 (601 aa).

Phosphoserine occurs at positions 29, 75, 223, and 244. The segment at 222 to 243 (SSLENEPSLGRTQKSKSEVIED) is disordered. The span at 282–305 (KEKLIKDSSDDRVSSKEHKVDKNE) shows a compositional bias: basic and acidic residues. The disordered stretch occupies residues 282 to 315 (KEKLIKDSSDDRVSSKEHKVDKNEAFSSEDSLGE). Polar residues predominate over residues 306–315 (AFSSEDSLGE). Ser312 is subject to Phosphoserine. The segment at 387–411 (TVCKSCGMIYTASNPEDEMQHVQHH) adopts a CCHH-type zinc-finger fold. A Phosphoserine modification is found at Ser512.

It belongs to the acetyltransferase family. ECO subfamily. As to expression, widely expressed in fetal tissues. In adult, it is expressed in thymus, placenta and small intestine.

The protein resides in the nucleus. It localises to the chromosome. The catalysed reaction is L-lysyl-[protein] + acetyl-CoA = N(6)-acetyl-L-lysyl-[protein] + CoA + H(+). Its function is as follows. Acetyltransferase required for the establishment of sister chromatid cohesion. Couples the processes of cohesion and DNA replication to ensure that only sister chromatids become paired together. In contrast to the structural cohesins, the deposition and establishment factors are required only during the S phase. Acetylates the cohesin component SMC3. The chain is N-acetyltransferase ESCO2 from Homo sapiens (Human).